Here is a 256-residue protein sequence, read N- to C-terminus: MLNIGPFSFHSRLLLGTGKFPDFDVQQKAIDVSEAEVLTFAVRRMDIFDAKQPNLLEKLDVKKYTLLPNTAGAKNAEEAVRIAKLAKASGLCDMIKVEVIGDDRTLLPDPVETLKASEMLLEEGFIVLPYTSDDVVLARKLQELGVHAIMPGASPIGSGLGIVNPLNLSFIIEQATVPVIVDAGIGSPADAAFAMELGADGVLLNTAVSGAKDPIKMAQAMKLSIEAGRLGFEAGRIGRKRCATASSPLEGMSVVE.

Catalysis depends on K96, which acts as the Schiff-base intermediate with DXP. 1-deoxy-D-xylulose 5-phosphate is bound by residues G157, 183–184, and 205–206; these read AG and NT.

It belongs to the ThiG family. As to quaternary structure, homotetramer. Forms heterodimers with either ThiH or ThiS.

It is found in the cytoplasm. The catalysed reaction is [ThiS sulfur-carrier protein]-C-terminal-Gly-aminoethanethioate + 2-iminoacetate + 1-deoxy-D-xylulose 5-phosphate = [ThiS sulfur-carrier protein]-C-terminal Gly-Gly + 2-[(2R,5Z)-2-carboxy-4-methylthiazol-5(2H)-ylidene]ethyl phosphate + 2 H2O + H(+). It participates in cofactor biosynthesis; thiamine diphosphate biosynthesis. In terms of biological role, catalyzes the rearrangement of 1-deoxy-D-xylulose 5-phosphate (DXP) to produce the thiazole phosphate moiety of thiamine. Sulfur is provided by the thiocarboxylate moiety of the carrier protein ThiS. In vitro, sulfur can be provided by H(2)S. The polypeptide is Thiazole synthase (Bacillus cereus (strain ATCC 10987 / NRS 248)).